Reading from the N-terminus, the 213-residue chain is Adenylate kinase (213 aa).

Residue 10–15 (GAGKGT) participates in ATP binding. The NMP stretch occupies residues 30-59 (AVGDIFRTIIKTSTSEAELINNYVKQGALI). AMP-binding positions include arginine 36, 57–59 (ALI), 85–88 (GYPR), and glutamine 92. The LID stretch occupies residues 123 to 161 (GRYSCKNCGKIYNVHFLQPKTDYVCDVCSSNVFDYRRDD). Residue arginine 124 participates in ATP binding. Zn(2+) contacts are provided by cysteine 127 and cysteine 130. 133–134 (IY) serves as a coordination point for ATP. Cysteine 147 and cysteine 150 together coordinate Zn(2+). Residues arginine 158 and arginine 169 each coordinate AMP. Lysine 197 is an ATP binding site.

The protein belongs to the adenylate kinase family. In terms of assembly, monomer.

The protein localises to the cytoplasm. It catalyses the reaction AMP + ATP = 2 ADP. The protein operates within purine metabolism; AMP biosynthesis via salvage pathway; AMP from ADP: step 1/1. Catalyzes the reversible transfer of the terminal phosphate group between ATP and AMP. Plays an important role in cellular energy homeostasis and in adenine nucleotide metabolism. In Rickettsia typhi (strain ATCC VR-144 / Wilmington), this protein is Adenylate kinase.